Consider the following 419-residue polypeptide: MHLLGFFSVACSLLAAALLPGPREAPAAAAAFESGLDLSDAEPDAGEATAYASKDLEEQLRSVSSVDELMTVLYPEYWKMYKCQLRKGGWQHNREQANLNSRTEETIKFAAAHYNTEILKSIDNEWRKTQCMPREVCIDVGKEFGVATNTFFKPPCVSVYRCGGCCNSEGLQCMNTSTSYLSKTLFEITVPLSQGPKPVTISFANHTSCRCMSKLDVYRQVHSIIRRSLPATLPQCQAANKTCPTNYMWNNHICRCLAQEDFMFSSDAGDDSTDGFHDICGPNKELDEETCQCVCRAGLRPASCGPHKELDRNSCQCVCKNKLFPSQCGANREFDENTCQCVCKRTCPRNQPLNPGKCACECTESPQKCLLKGKKFHHQTCSCYRRPCTNRQKACEPGFSYSEEVCRCVPSYWKRPQMS.

The signal sequence occupies residues 1 to 31; it reads MHLLGFFSVACSLLAAALLPGPREAPAAAAA. The propeptide at 32–111 is or 102; it reads FESGLDLSDA…RTEETIKFAA (80 aa). 3 disulfides stabilise this stretch: Cys-131-Cys-173, Cys-162-Cys-209, and Cys-166-Cys-211. Asn-175, Asn-205, and Asn-240 each carry an N-linked (GlcNAc...) asparagine glycan. Positions 228 to 419 are excised as a propeptide; sequence SLPATLPQCQ…PSYWKRPQMS (192 aa). A run of 4 repeats spans residues 280–295, 304–319, 328–343, and 347–362. A 4 X 16 AA repeats of C-X(10)-C-X-C-X(1,3)-C region spans residues 280–362; sequence CGPNKELDEE…LNPGKCACEC (83 aa).

Belongs to the PDGF/VEGF growth factor family. In terms of assembly, homodimer; non-covalent and antiparallel. Interacts with FLT4/VEGFR3; the interaction is required for FLT4/VEGFR3 homodimarization and activation. Post-translationally, undergoes a complex proteolytic maturation which generates a variety of processed secreted forms with increased activity toward VEGFR-3, but only the fully processed form could activate VEGFR-2. VEGF-C first form an antiparallel homodimer linked by disulfide bonds. Before secretion, a cleavage occurs between Arg-227 and Ser-228 producing a heterotetramer. The next extracellular step of the processing removes the N-terminal propeptide. Finally the mature VEGF-C is composed mostly of two VEGF homology domains (VHDs) bound by non-covalent interactions. Expressed in the spleen. Expressed in the lymph node, thymus, appendix and bone marrow. Expressed in the heart, placenta, skeletal muscle, ovary and small intestine. Expressed in the prostate, testis and colon.

It is found in the secreted. In terms of biological role, growth factor active in angiogenesis, and endothelial cell growth, stimulating their proliferation and migration and also has effects on the permeability of blood vessels. May function in angiogenesis of the venous and lymphatic vascular systems during embryogenesis, and also in the maintenance of differentiated lymphatic endothelium in adults. Binds and activates KDR/VEGFR2 and FLT4/VEGFR3 receptors. The chain is Vascular endothelial growth factor C (VEGFC) from Homo sapiens (Human).